The sequence spans 223 residues: Flagellar L-ring protein (223 aa).

The first 18 residues, 1 to 18, serve as a signal peptide directing secretion; that stretch reads MKKSLMALIVVGSFLLSA. The N-palmitoyl cysteine moiety is linked to residue Cys-19. The S-diacylglycerol cysteine moiety is linked to residue Cys-19.

This sequence belongs to the FlgH family. The basal body constitutes a major portion of the flagellar organelle and consists of four rings (L,P,S, and M) mounted on a central rod.

It localises to the cell outer membrane. The protein resides in the bacterial flagellum basal body. Functionally, assembles around the rod to form the L-ring and probably protects the motor/basal body from shearing forces during rotation. This Herminiimonas arsenicoxydans protein is Flagellar L-ring protein.